Here is a 1311-residue protein sequence, read N- to C-terminus: Sterol regulatory element-binding protein cleavage-activating protein (1311 aa).

At Met-1–His-18 the chain is on the cytoplasmic side. Residues Gly-19–Ala-39 traverse the membrane as a helical segment. At Ser-40 to Glu-277 the chain is on the lumenal side. The loop-1 stretch occupies residues Lys-46–Glu-282. Residues Asn-242 and Asn-261 are each glycosylated (N-linked (GlcNAc...) asparagine). Residues Ile-278–Tyr-298 traverse the membrane as a helical segment. The 159-residue stretch at Glu-282–Ile-440 folds into the SSD domain. The Cytoplasmic portion of the chain corresponds to Phe-299–Lys-310. The helical transmembrane segment at Trp-311–Leu-331 threads the bilayer. Residues Cys-332–Asn-342 are Lumenal-facing. A helical transmembrane segment spans residues Gly-343 to Thr-363. Residues Lys-364–Gly-399 lie on the Cytoplasmic side of the membrane. A helical membrane pass occupies residues Ile-400–Val-420. Residue Val-421 is a topological domain, lumenal. A helical transmembrane segment spans residues Gly-422–Ile-442. The Cytoplasmic segment spans residues Arg-443–Arg-512. An ER export signal motif is present at residues Met-445 to Leu-450. Residues Ile-513–Leu-533 form a helical membrane-spanning segment. The segment at Asp-529–Lys-726 is loop-7. Topologically, residues Arg-534–Thr-723 are lumenal. Residues Asn-583 and Asn-651 are each glycosylated (N-linked (GlcNAc...) asparagine). A helical membrane pass occupies residues Leu-724–Leu-744. The Cytoplasmic segment spans residues Leu-745–Asp-1311. The interaction with srebf stretch occupies residues Arg-747–Asp-1311. 7 WD repeats span residues Gly-790–Ile-827, Ser-997–Ser-1034, Asp-1037–Gln-1076, Ala-1109–Thr-1146, Gly-1149–His-1187, Gly-1190–Ser-1227, and Gln-1230–Thr-1267.

The protein belongs to the WD repeat SCAP family. In terms of assembly, membrane region forms a homotetramer. Component of the SCAP-SREBP complex (composed of SCAP and srebf1/srebp1 or srebf2/srebp2). Forms a ternary complex with insig1 or insig2 through its transmembrane domains at high sterol concentrations. Interacts with the SEC23-SEC24 complex.

The protein localises to the endoplasmic reticulum membrane. It localises to the golgi apparatus membrane. Its subcellular location is the cytoplasmic vesicle. It is found in the COPII-coated vesicle membrane. Its function is as follows. Escort protein required for cholesterol as well as lipid homeostasis. Regulates export of the SCAP-SREBP complex from the endoplasmic reticulum to the Golgi upon low cholesterol, thereby regulating the processing of sterol regulatory element-binding proteins (SREBPs) SREBF1/SREBP1 and SREBF2/SREBP2. At high sterol concentrations, formation of a ternary complex with INSIG (INSIG1 or INSIG2) leads to mask the ER export signal in SCAP, promoting retention of the complex in the endoplasmic reticulum. Low sterol concentrations trigger release of INSIG, a conformational change in the SSD domain of SCAP, unmasking of the ER export signal, promoting recruitment into COPII-coated vesicles and transport of the SCAP-SREBP to the Golgi: in the Golgi, SREBPs are then processed, releasing the transcription factor fragment of SREBPs from the membrane, its import into the nucleus and up-regulation of LDLR, INSIG1 and the mevalonate pathway. Binds cholesterol via its SSD domain. This is Sterol regulatory element-binding protein cleavage-activating protein from Xenopus laevis (African clawed frog).